Here is a 327-residue protein sequence, read N- to C-terminus: Phenylalanine--tRNA ligase alpha subunit (327 aa).

Glu-252 is a binding site for Mg(2+).

Belongs to the class-II aminoacyl-tRNA synthetase family. Phe-tRNA synthetase alpha subunit type 1 subfamily. As to quaternary structure, tetramer of two alpha and two beta subunits. Mg(2+) is required as a cofactor.

The protein resides in the cytoplasm. It carries out the reaction tRNA(Phe) + L-phenylalanine + ATP = L-phenylalanyl-tRNA(Phe) + AMP + diphosphate + H(+). The protein is Phenylalanine--tRNA ligase alpha subunit of Shewanella amazonensis (strain ATCC BAA-1098 / SB2B).